The sequence spans 428 residues: Type II methyltransferase M.BanI (428 aa).

An SAM-dependent MTase C5-type domain is found at 3–417; it reads IKFVDLFAGI…EDLFQNNVNE (415 aa). Cysteine 76 is an active-site residue.

This sequence belongs to the class I-like SAM-binding methyltransferase superfamily. C5-methyltransferase family. In terms of assembly, monomer.

It carries out the reaction a 2'-deoxycytidine in DNA + S-adenosyl-L-methionine = a 5-methyl-2'-deoxycytidine in DNA + S-adenosyl-L-homocysteine + H(+). A methylase, recognizes the double-stranded sequence 5'-GGYRCC-3', methylates C-4 on both strands, and protects the DNA from cleavage by the BanI endonuclease. This chain is Type II methyltransferase M.BanI (banIM), found in Aneurinibacillus aneurinilyticus (Bacillus aneurinolyticus).